The primary structure comprises 145 residues: Arginine repressor (145 aa).

The protein belongs to the ArgR family.

It is found in the cytoplasm. It participates in amino-acid biosynthesis; L-arginine biosynthesis [regulation]. Its function is as follows. Regulates arginine biosynthesis genes. The sequence is that of Arginine repressor from Solibacter usitatus (strain Ellin6076).